A 416-amino-acid chain; its full sequence is Gamma-glutamyl phosphate reductase (416 aa).

This sequence belongs to the gamma-glutamyl phosphate reductase family.

The protein localises to the cytoplasm. The enzyme catalyses L-glutamate 5-semialdehyde + phosphate + NADP(+) = L-glutamyl 5-phosphate + NADPH + H(+). It functions in the pathway amino-acid biosynthesis; L-proline biosynthesis; L-glutamate 5-semialdehyde from L-glutamate: step 2/2. In terms of biological role, catalyzes the NADPH-dependent reduction of L-glutamate 5-phosphate into L-glutamate 5-semialdehyde and phosphate. The product spontaneously undergoes cyclization to form 1-pyrroline-5-carboxylate. The chain is Gamma-glutamyl phosphate reductase from Halalkalibacterium halodurans (strain ATCC BAA-125 / DSM 18197 / FERM 7344 / JCM 9153 / C-125) (Bacillus halodurans).